Here is a 111-residue protein sequence, read N- to C-terminus: Disintegrin DS-AS (111 aa).

The N-terminal stretch at 1 to 20 is a signal peptide; the sequence is MIQVLLVIICLAVFPYQGSC. Positions 21-47 are excised as a propeptide; sequence IILESGNVNDYEIVYPKKLIVLPTGAM. A Disintegrin domain is found at 47 to 111; it reads MNSPHPCCDP…PDCPRNPYKD (65 aa). Intrachain disulfides connect cysteine 53–cysteine 76, cysteine 67–cysteine 73, cysteine 72–cysteine 97, and cysteine 85–cysteine 104. A Cell attachment site motif is present at residues 89-91; that stretch reads RGD.

As to quaternary structure, heterodimer; disulfide-linked.

It is found in the secreted. In terms of biological role, inhibits ADP-induced platelet aggregation in human platelet-rich plasma (IC(50) is 8 uM). The protein is Disintegrin DS-AS of Atheris squamigera (Variable bush viper).